An 895-amino-acid polypeptide reads, in one-letter code: Alanine--tRNA ligase (895 aa).

Residues His577, His581, Cys680, and His684 each contribute to the Zn(2+) site.

This sequence belongs to the class-II aminoacyl-tRNA synthetase family. Requires Zn(2+) as cofactor.

It localises to the cytoplasm. It carries out the reaction tRNA(Ala) + L-alanine + ATP = L-alanyl-tRNA(Ala) + AMP + diphosphate. Its function is as follows. Catalyzes the attachment of alanine to tRNA(Ala) in a two-step reaction: alanine is first activated by ATP to form Ala-AMP and then transferred to the acceptor end of tRNA(Ala). Also edits incorrectly charged Ser-tRNA(Ala) and Gly-tRNA(Ala) via its editing domain. The chain is Alanine--tRNA ligase from Kocuria rhizophila (strain ATCC 9341 / DSM 348 / NBRC 103217 / DC2201).